The primary structure comprises 541 residues: Formimidoyltransferase-cyclodeaminase (541 aa).

A formiminotransferase N-subdomain region spans residues 1 to 181; that stretch reads MAKLVECVPN…GATVTGARTF (181 aa). Histidine 82 functions as the For formimidoyltransferase activity in the catalytic mechanism. Folate is bound at residue 163–172; the sequence is GPPAFVPQWG. The tract at residues 182–326 is formiminotransferase C-subdomain; it reads LIAYNINLLC…PRERIIEYLV (145 aa). The interval 327-334 is linker; that stretch reads QAGQEDKG. The tract at residues 335 to 541 is cyclodeaminase/cyclohydrolase; that stretch reads LVTKPLGAFV…VLALLEKREA (207 aa). Residue aspartate 412 is the For cyclodeaminase activity of the active site.

The protein in the C-terminal section; belongs to the cyclodeaminase/cyclohydrolase family. In the N-terminal section; belongs to the formiminotransferase family. Homooctamer, including four polyglutamate binding sites. The subunits are arranged as a tetramer of dimers, and form a planar ring-shaped structure.

It localises to the cytoplasm. Its subcellular location is the cytosol. The protein localises to the golgi apparatus. It is found in the cytoskeleton. The protein resides in the microtubule organizing center. It localises to the centrosome. Its subcellular location is the centriole. The enzyme catalyses 5-formimidoyltetrahydrofolate + L-glutamate = N-formimidoyl-L-glutamate + (6S)-5,6,7,8-tetrahydrofolate. The catalysed reaction is 5-formimidoyltetrahydrofolate + 2 H(+) = (6R)-5,10-methenyltetrahydrofolate + NH4(+). It participates in amino-acid degradation; L-histidine degradation into L-glutamate; L-glutamate from N-formimidoyl-L-glutamate (transferase route): step 1/1. Its function is as follows. Folate-dependent enzyme, that displays both transferase and deaminase activity. Serves to channel one-carbon units from formiminoglutamate to the folate pool. In terms of biological role, binds and promotes bundling of vimentin filaments originating from the Golgi. This Gallus gallus (Chicken) protein is Formimidoyltransferase-cyclodeaminase (FTCD).